Consider the following 95-residue polypeptide: Large ribosomal subunit protein bL27 (95 aa).

The propeptide occupies 1 to 6 (MKLQLF). The interval 1-25 (MKLQLFAHKKGVGSSRNGRDSESKR) is disordered.

It belongs to the bacterial ribosomal protein bL27 family. The N-terminus is cleaved by ribosomal processing cysteine protease Prp.

The chain is Large ribosomal subunit protein bL27 from Thermoanaerobacter pseudethanolicus (strain ATCC 33223 / 39E) (Clostridium thermohydrosulfuricum).